Here is a 533-residue protein sequence, read N- to C-terminus: Chromosomal replication initiator protein DnaA (533 aa).

The tract at residues 1–72 is domain I, interacts with DnaA modulators; that stretch reads MNDFWQHCSA…DLARDFWNAP (72 aa). The domain II stretch occupies residues 72 to 196; sequence PIEVQFVLDP…EAADSMYERS (125 aa). Residues 83-113 are disordered; the sequence is AGQRSPAGATPLAPRAPLPSANPAPVAPGPA. The segment covering 96-110 has biased composition (pro residues); sequence PRAPLPSANPAPVAP. Positions 197 to 413 are domain III, AAA+ region; it reads KLNPVLTFDN…GALRKILAYS (217 aa). Residues Gly-241, Gly-243, Lys-244, and Thr-245 each coordinate ATP. The segment at 414–533 is domain IV, binds dsDNA; the sequence is KFHGREITIE…LHVLEQTLKG (120 aa).

This sequence belongs to the DnaA family. As to quaternary structure, oligomerizes as a right-handed, spiral filament on DNA at oriC.

It is found in the cytoplasm. Functionally, plays an essential role in the initiation and regulation of chromosomal replication. ATP-DnaA binds to the origin of replication (oriC) to initiate formation of the DNA replication initiation complex once per cell cycle. Binds the DnaA box (a 9 base pair repeat at the origin) and separates the double-stranded (ds)DNA. Forms a right-handed helical filament on oriC DNA; dsDNA binds to the exterior of the filament while single-stranded (ss)DNA is stabiized in the filament's interior. The ATP-DnaA-oriC complex binds and stabilizes one strand of the AT-rich DNA unwinding element (DUE), permitting loading of DNA polymerase. After initiation quickly degrades to an ADP-DnaA complex that is not apt for DNA replication. Binds acidic phospholipids. This Burkholderia mallei (strain SAVP1) protein is Chromosomal replication initiator protein DnaA.